The primary structure comprises 179 residues: CASP-like protein 5A2 (179 aa).

The tract at residues 1 to 24 (MNVSHASVHPVEDPPAAATEVENP) is disordered. Over 1-38 (MNVSHASVHPVEDPPAAATEVENPPRVRMDDMEGMPGT) the chain is Cytoplasmic. A helical membrane pass occupies residues 39–59 (LLGLALRFFQFLFAAAALCVM). Residues 60 to 70 (ASTSDFPSVTA) are Extracellular-facing. A helical membrane pass occupies residues 71-91 (FCYLVAATGLQSLWSLALAMV). Topologically, residues 92-115 (DVYAIMVKRSLQNRRLVSLFAIGD) are cytoplasmic. A helical membrane pass occupies residues 116 to 136 (GVTSTLTFAAACASAGITVLI). Topologically, residues 137-155 (DNDLNSCAQNHCVQFETST) are extracellular. Residues 156 to 176 (ALAFISWFAALPSFLFNFWSL) form a helical membrane-spanning segment. Topologically, residues 177–179 (ASR) are cytoplasmic.

It belongs to the Casparian strip membrane proteins (CASP) family. Homodimer and heterodimers.

The protein resides in the cell membrane. The polypeptide is CASP-like protein 5A2 (Arabidopsis thaliana (Mouse-ear cress)).